Here is a 181-residue protein sequence, read N- to C-terminus: MISKYCLFVIVLGTTGTALVLTNDSNKLQNVKAVIAIQDKVLHFHDHTTDCVGELMCIFAALPESERNQTLSIPLGLLTTIATDKGRDRYSSIYAEAKKLLAGYPTIKHALNAAENGHSTKDKNVCASMYSKCPFEPDDLLDTINDLEDITTLFSKNVFGKVIADAIEYNYTQVGMTQTHS.

The signal sequence occupies residues methionine 1 to threonine 22.

As to expression, component of the organic matrix of calcified shell layers like nacre and prisms.

The protein localises to the secreted. This chain is Mytilin-1, found in Mytilus galloprovincialis (Mediterranean mussel).